Reading from the N-terminus, the 251-residue chain is Probable transcriptional regulatory protein BLA_1344 (251 aa).

The protein belongs to the TACO1 family.

It localises to the cytoplasm. The chain is Probable transcriptional regulatory protein BLA_1344 from Bifidobacterium animalis subsp. lactis (strain AD011).